The sequence spans 165 residues: Xanthine-guanine phosphoribosyltransferase (165 aa).

5-phospho-alpha-D-ribose 1-diphosphate is bound by residues 41 to 42 (RG) and 98 to 106 (DDLTDTGKT). D99 contributes to the Mg(2+) binding site. Positions 102 and 145 each coordinate guanine. Xanthine-binding residues include D102 and I145. Residues 102-106 (DTGKT) and 144-145 (WI) contribute to the GMP site.

Belongs to the purine/pyrimidine phosphoribosyltransferase family. XGPT subfamily. As to quaternary structure, homotetramer. It depends on Mg(2+) as a cofactor.

The protein localises to the cell inner membrane. The catalysed reaction is GMP + diphosphate = guanine + 5-phospho-alpha-D-ribose 1-diphosphate. It catalyses the reaction XMP + diphosphate = xanthine + 5-phospho-alpha-D-ribose 1-diphosphate. It carries out the reaction IMP + diphosphate = hypoxanthine + 5-phospho-alpha-D-ribose 1-diphosphate. Its pathway is purine metabolism; GMP biosynthesis via salvage pathway; GMP from guanine: step 1/1. It functions in the pathway purine metabolism; XMP biosynthesis via salvage pathway; XMP from xanthine: step 1/1. Functionally, purine salvage pathway enzyme that catalyzes the transfer of the ribosyl-5-phosphate group from 5-phospho-alpha-D-ribose 1-diphosphate (PRPP) to the N9 position of the 6-oxopurines guanine and xanthine to form the corresponding ribonucleotides GMP (guanosine 5'-monophosphate) and XMP (xanthosine 5'-monophosphate), with the release of PPi. To a lesser extent, also acts on hypoxanthine. This is Xanthine-guanine phosphoribosyltransferase from Chelativorans sp. (strain BNC1).